Reading from the N-terminus, the 95-residue chain is Co-chaperonin GroES (95 aa).

This sequence belongs to the GroES chaperonin family. As to quaternary structure, heptamer of 7 subunits arranged in a ring. Interacts with the chaperonin GroEL.

The protein resides in the cytoplasm. In terms of biological role, together with the chaperonin GroEL, plays an essential role in assisting protein folding. The GroEL-GroES system forms a nano-cage that allows encapsulation of the non-native substrate proteins and provides a physical environment optimized to promote and accelerate protein folding. GroES binds to the apical surface of the GroEL ring, thereby capping the opening of the GroEL channel. The polypeptide is Co-chaperonin GroES (Francisella tularensis subsp. holarctica (strain FTNF002-00 / FTA)).